A 35-amino-acid chain; its full sequence is Water stress-responsive protein 7 (35 aa).

The protein is Water stress-responsive protein 7 of Pinus pinaster (Maritime pine).